We begin with the raw amino-acid sequence, 227 residues long: Cytochrome c oxidase subunit 2 (227 aa).

Topologically, residues 1–14 are mitochondrial intermembrane; the sequence is MAYPFQLGLQDATS. A helical membrane pass occupies residues 15-45; it reads PIMEELMNFHDHTLMIVFLISSLVLYIISLM. Over 46-59 the chain is Mitochondrial matrix; it reads LTTKLTHTSTMDAQ. Residues 60-87 traverse the membrane as a helical segment; that stretch reads EVETIWTILPAVILILIALPSLRILYMM. At 88–227 the chain is on the mitochondrial intermembrane side; it reads DEINNPVLTV…NFENWSTSMI (140 aa). Residues H161, C196, E198, C200, H204, and M207 each coordinate Cu cation. Residue E198 coordinates Mg(2+).

Belongs to the cytochrome c oxidase subunit 2 family. In terms of assembly, component of the cytochrome c oxidase (complex IV, CIV), a multisubunit enzyme composed of 14 subunits. The complex is composed of a catalytic core of 3 subunits MT-CO1, MT-CO2 and MT-CO3, encoded in the mitochondrial DNA, and 11 supernumerary subunits COX4I, COX5A, COX5B, COX6A, COX6B, COX6C, COX7A, COX7B, COX7C, COX8 and NDUFA4, which are encoded in the nuclear genome. The complex exists as a monomer or a dimer and forms supercomplexes (SCs) in the inner mitochondrial membrane with NADH-ubiquinone oxidoreductase (complex I, CI) and ubiquinol-cytochrome c oxidoreductase (cytochrome b-c1 complex, complex III, CIII), resulting in different assemblies (supercomplex SCI(1)III(2)IV(1) and megacomplex MCI(2)III(2)IV(2)). Found in a complex with TMEM177, COA6, COX18, COX20, SCO1 and SCO2. Interacts with TMEM177 in a COX20-dependent manner. Interacts with COX20. Interacts with COX16. It depends on Cu cation as a cofactor.

Its subcellular location is the mitochondrion inner membrane. The catalysed reaction is 4 Fe(II)-[cytochrome c] + O2 + 8 H(+)(in) = 4 Fe(III)-[cytochrome c] + 2 H2O + 4 H(+)(out). Functionally, component of the cytochrome c oxidase, the last enzyme in the mitochondrial electron transport chain which drives oxidative phosphorylation. The respiratory chain contains 3 multisubunit complexes succinate dehydrogenase (complex II, CII), ubiquinol-cytochrome c oxidoreductase (cytochrome b-c1 complex, complex III, CIII) and cytochrome c oxidase (complex IV, CIV), that cooperate to transfer electrons derived from NADH and succinate to molecular oxygen, creating an electrochemical gradient over the inner membrane that drives transmembrane transport and the ATP synthase. Cytochrome c oxidase is the component of the respiratory chain that catalyzes the reduction of oxygen to water. Electrons originating from reduced cytochrome c in the intermembrane space (IMS) are transferred via the dinuclear copper A center (CU(A)) of subunit 2 and heme A of subunit 1 to the active site in subunit 1, a binuclear center (BNC) formed by heme A3 and copper B (CU(B)). The BNC reduces molecular oxygen to 2 water molecules using 4 electrons from cytochrome c in the IMS and 4 protons from the mitochondrial matrix. In Apodemus mystacinus (Broad-toothed field mouse), this protein is Cytochrome c oxidase subunit 2 (MT-CO2).